Consider the following 766-residue polypeptide: 5-methyltetrahydropteroyltriglutamate--homocysteine methyltransferase (766 aa).

5-methyltetrahydropteroyltri-L-glutamate is bound by residues 23-26 and Lys121; that span reads RELK. L-homocysteine is bound by residues 438 to 440 and Glu491; that span reads IGS. Residues 438–440 and Glu491 each bind L-methionine; that span reads IGS. 5-methyltetrahydropteroyltri-L-glutamate contacts are provided by residues 522-523 and Trp568; that span reads RC. An L-homocysteine-binding site is contributed by Asp606. An L-methionine-binding site is contributed by Asp606. Glu612 provides a ligand contact to 5-methyltetrahydropteroyltri-L-glutamate. Zn(2+)-binding residues include His648, Cys650, and Glu672. The Proton donor role is filled by His701. Cys733 lines the Zn(2+) pocket.

Belongs to the vitamin-B12 independent methionine synthase family. Zn(2+) serves as cofactor.

It catalyses the reaction 5-methyltetrahydropteroyltri-L-glutamate + L-homocysteine = tetrahydropteroyltri-L-glutamate + L-methionine. It functions in the pathway amino-acid biosynthesis; L-methionine biosynthesis via de novo pathway; L-methionine from L-homocysteine (MetE route): step 1/1. Functionally, catalyzes the transfer of a methyl group from 5-methyltetrahydrofolate to homocysteine resulting in methionine formation. The polypeptide is 5-methyltetrahydropteroyltriglutamate--homocysteine methyltransferase (Photobacterium profundum (strain SS9)).